Reading from the N-terminus, the 88-residue chain is Ribonuclease P protein component 1 (88 aa).

The protein belongs to the eukaryotic/archaeal RNase P protein component 1 family. As to quaternary structure, consists of a catalytic RNA component and at least 4-5 protein subunits.

It localises to the cytoplasm. It catalyses the reaction Endonucleolytic cleavage of RNA, removing 5'-extranucleotides from tRNA precursor.. Functionally, part of ribonuclease P, a protein complex that generates mature tRNA molecules by cleaving their 5'-ends. This chain is Ribonuclease P protein component 1, found in Nitrosopumilus maritimus (strain SCM1).